The primary structure comprises 159 residues: Large ribosomal subunit protein uL11 (159 aa).

The protein belongs to the universal ribosomal protein uL11 family. As to quaternary structure, part of the ribosomal stalk of the 50S ribosomal subunit. Interacts with L10 and the large rRNA to form the base of the stalk. L10 forms an elongated spine to which L12 dimers bind in a sequential fashion forming a multimeric L10(L12)X complex.

Forms part of the ribosomal stalk which helps the ribosome interact with GTP-bound translation factors. The protein is Large ribosomal subunit protein uL11 of Methanococcus vannielii (strain ATCC 35089 / DSM 1224 / JCM 13029 / OCM 148 / SB).